Reading from the N-terminus, the 1186-residue chain is MYND-type zinc finger-containing chromatin reader ZMYND8 (1186 aa).

Positions 1–12 (MDISTRSKDPGS) are enriched in basic and acidic residues. Positions 1–57 (MDISTRSKDPGSAERTAQKRKFPSPPHSSNGHSPQDTSTSPIKKKKKPGLLNSNNKE) are disordered. The required for interaction with CCNT1 stretch occupies residues 1–850 (MDISTRSKDP…QQQQQQQNQQ (850 aa)). Residue S12 forms a Glycyl lysine isopeptide (Lys-Gly) (interchain with G-Cter in SUMO2) linkage. S24 carries the phosphoserine modification. Residues K56 and K70 each participate in a glycyl lysine isopeptide (Lys-Gly) (interchain with G-Cter in SUMO2) cross-link. The interval 75–268 (TDPVDVVPQD…YLAACQKRDN (194 aa)) is interaction with histone H3K4me0. The segment at 75-406 (TDPVDVVPQD…VKLNFDMTAS (332 aa)) is interaction with histone H3K14ac. Residues 88–133 (DFYCWVCHREGQVLCCELCPRVYHAKCLRLTSEPEGDWFCPECEKI) form a PHD-type zinc finger. Residues 88-327 (DFYCWVCHRE…INNCYLMSKE (240 aa)) are required for interaction with histone H3 and histone H4. C91, C94, C103, C106, H111, C114, C127, and C130 together coordinate Zn(2+). The Bromo domain occupies 145–252 (AMTMLTIEQL…KICEHEMNEI (108 aa)). 3 residues coordinate Zn(2+): C255, C258, and C274. In terms of domain architecture, PWWP spans 277–327 (PHPLVWAKLKGFPFWPAKALRDKDGQVDARFFGQHDRAWVPINNCYLMSKE). Residue K390 forms a Glycyl lysine isopeptide (Lys-Gly) (interchain with G-Cter in SUMO2) linkage. At T404 the chain carries Phosphothreonine. S406 bears the Phosphoserine mark. A disordered region spans residues 412–512 (SKPVLSGGTG…TTKTDKTSTT (101 aa)). Position 413 is an N6-acetyllysine; alternate (K413). K413 is covalently cross-linked (Glycyl lysine isopeptide (Lys-Gly) (interchain with G-Cter in SUMO2); alternate). Phosphoserine is present on residues S417, S425, and S432. The span at 433 to 442 (PMSTNSSVHT) shows a compositional bias: polar residues. S444 carries the post-translational modification Phosphoserine. A Glycyl lysine isopeptide (Lys-Gly) (interchain with G-Cter in SUMO2) cross-link involves residue K453. 6 positions are modified to phosphoserine: S460, S462, S465, S486, S490, and S495. Positions 472 to 489 (STASPASTKTGQAGSLSG) are enriched in polar residues. A Glycyl lysine isopeptide (Lys-Gly) (interchain with G-Cter in SUMO2) cross-link involves residue K505. Phosphoserine occurs at positions 514 and 523. A Glycyl lysine isopeptide (Lys-Gly) (interchain with G-Cter in SUMO2) cross-link involves residue K530. The residue at position 541 (T541) is a Phosphothreonine. S547 carries the post-translational modification Phosphoserine. Residue K549 forms a Glycyl lysine isopeptide (Lys-Gly) (interchain with G-Cter in SUMO2) linkage. Position 563 is a phosphothreonine (T563). The disordered stretch occupies residues 582–884 (TAVEHSDSED…ITQSPSTSTI (303 aa)). Composition is skewed to basic and acidic residues over residues 585 to 597 (EHSD…KSDS) and 606 to 631 (DEQK…EPSA). Residues K611 and K645 each participate in a glycyl lysine isopeptide (Lys-Gly) (interchain with G-Cter in SUMO2) cross-link. 2 positions are modified to phosphoserine: S652 and S655. Positions 656 to 696 (EKADPGAVKDKASPEPEKDFSEKAKPSPHPIKDKLKGKDET) are enriched in basic and acidic residues. Residue K657 forms a Glycyl lysine isopeptide (Lys-Gly) (interchain with G-Cter in SUMO2) linkage. Residues S668, S682, S707, S709, and S737 each carry the phosphoserine modification. Basic and acidic residues predominate over residues 718-738 (GEDHSGREGRKNKKEPKEPSP). A Phosphothreonine modification is found at T746. Residues S754 and S756 each carry the phosphoserine modification. Residues 766–799 (SSAQTSAAGATATTSTSSTVTVTAPAPAATGSPV) are compositionally biased toward low complexity. Over residues 818–832 (VWNSSSKFQTSSQKW) the composition is skewed to polar residues. A compositionally biased stretch (low complexity) spans 835–857 (QKMQRQQQQQQQQNQQQQPQSSQ). Positions 873-884 (KEITQSPSTSTI) are enriched in polar residues. A required for homodimerization region spans residues 875-1047 (ITQSPSTSTI…YCCWNTSYCD (173 aa)). Zn(2+) is bound by residues C1028, C1031, C1039, C1040, C1046, C1050, H1058, and C1062. Residues 1028-1062 (CANCKKEAIFYCCWNTSYCDYPCQQAHWPEHMKSC) form an MYND-type zinc finger. The required for recruitment to DNA damage sites and for interaction with the NuRD complex, CHD4, HDAC1, HDAC2 and KDM1A stretch occupies residues 1028 to 1062 (CANCKKEAIFYCCWNTSYCDYPCQQAHWPEHMKSC). Residues 1071–1186 (QEADAEVNTE…KESRLDTFWD (116 aa)) form a disordered region. A compositionally biased stretch (low complexity) spans 1085–1103 (SSQGSSSSTQSAPSETASA). Over residues 1104–1116 (SKEKETSAEKSKE) the composition is skewed to basic and acidic residues. A Glycyl lysine isopeptide (Lys-Gly) (interchain with G-Cter in SUMO2) cross-link involves residue K1115. Phosphoserine is present on S1119. Positions 1121–1140 (LDLSGSRETPSSILLGSNQG) are enriched in polar residues. A Phosphoserine modification is found at S1141. The interval 1147-1186 (NKSSWSSSDEKRGSTRSDHNTSTSTKSLLPKESRLDTFWD) is interaction with PRKCB1. 2 stretches are compositionally biased toward basic and acidic residues: residues 1154 to 1165 (SDEKRGSTRSDH) and 1175 to 1186 (LPKESRLDTFWD).

As to quaternary structure, monomer and homodimer. Interacts with NuRD subcomplexes containing GATAD2A. Interacts with the histone deacetylase NuRD complex subunit CHD4; the interaction is direct, appears to occur with monomeric ZMYND8, and is increased following DNA damage. Interacts (via N-terminus) with the P-TEFb complex subunit CCNT1 (via central region); the interaction is direct and the association appears to occur between homodimeric ZMYND8 and the activated form of the P-TEFb complex. Interacts (via N-terminus) with DBN1 (via ADF-H domain); the interaction leads to sequestering of ZMYND8 in the cytoplasm. Interacts with the P-TEFb complex subunit CDK9; the association appears to occur between homodimeric ZMYND8 and the activated form of the P-TEFb complex. Interacts with EZH2; the interaction is dependent on the presence of chromatin. Interacts (via MYND domain) with the NuRD complex subunit GATAD2A. Interacts with histone H3 (via N-terminus) that is both methylated at 'Lys-4' (H3K4me1) and acetylated at 'Lys-14' (H3K14ac), with histone H3 (via N-terminus) unmodified at 'Lys-4' (H3K4me0) and acetylated at 'Lys-14' (H3K14ac), and with histone H3 (via N-terminus) di-methylated at 'Lys-36' (H3K36me2). Interacts (via Bromo domain) with histone H4 acetylated at 'Lys-16' (H4K16ac). Interacts with HDAC1. Interacts with HDAC2. Interacts with KDM1A. Interacts with KDM5C. Interacts with KDM5D. Interacts in vitro with PRKCB. Interacts with RNA polymerase II subunit POLR2A phosphorylated at 'Ser-5'. Interacts with ZNF592. Interacts with ZNF687. Does not interact with GATAD2B. Expressed in neurons (at protein level). Absent in astrocytes (at protein level). Expressed in all tissues examined with highest expression in brain, lung, pancreas, and placenta. Expressed in cutaneous T-cell lymphomas (CTCL).

It is found in the nucleus. The protein resides in the chromosome. The protein localises to the cytoplasm. Chromatin reader that recognizes dual histone modifications such as histone H3.1 dimethylated at 'Lys-36' and histone H4 acetylated at 'Lys-16' (H3.1K36me2-H4K16ac) and histone H3 methylated at 'Lys-4' and histone H4 acetylated at 'Lys-14' (H3K4me1-H3K14ac). May act as a transcriptional corepressor for KDM5D by recognizing the dual histone signature H3K4me1-H3K14ac. May also act as a transcriptional corepressor for KDM5C and EZH2. Recognizes acetylated histone H4 and recruits the NuRD chromatin remodeling complex to damaged chromatin for transcriptional repression and double-strand break repair by homologous recombination. Also activates transcription elongation by RNA polymerase II through recruiting the P-TEFb complex to target promoters. Localizes to H3.1K36me2-H4K16ac marks at all-trans-retinoic acid (ATRA)-responsive genes and positively regulates their expression. Promotes neuronal differentiation by associating with regulatory regions within the MAPT gene, to enhance transcription of a protein-coding MAPT isoform and suppress the non-coding MAPT213 isoform. Suppresses breast cancer, and prostate cancer cell invasion and metastasis. The chain is MYND-type zinc finger-containing chromatin reader ZMYND8 (ZMYND8) from Homo sapiens (Human).